Reading from the N-terminus, the 200-residue chain is HTH-type transcriptional repressor KstR2 (200 aa).

Positions 9 to 69 (NSRRGELLEL…ELLRGFLDWL (61 aa)) constitute an HTH tetR-type domain. A DNA-binding region (H-T-H motif) is located at residues 32 to 51 (TVRDIADGAGILSGSLYHHF).

As to quaternary structure, homodimer.

Functionally, controls the expression of a small regulon that may play a role in the utilization of cholesterol. The sequence is that of HTH-type transcriptional repressor KstR2 (kstR2) from Mycobacterium tuberculosis (strain CDC 1551 / Oshkosh).